Consider the following 545-residue polypeptide: Methionine--tRNA ligase (545 aa).

Positions Pro-12–His-22 match the 'HIGH' region motif. Residues Cys-143, Cys-146, Cys-156, and Cys-159 each coordinate Zn(2+). Residues Lys-329 to Ser-333 carry the 'KMSKS' region motif. Lys-332 is a binding site for ATP.

Belongs to the class-I aminoacyl-tRNA synthetase family. MetG type 1 subfamily. Monomer. Requires Zn(2+) as cofactor.

Its subcellular location is the cytoplasm. The catalysed reaction is tRNA(Met) + L-methionine + ATP = L-methionyl-tRNA(Met) + AMP + diphosphate. Its function is as follows. Is required not only for elongation of protein synthesis but also for the initiation of all mRNA translation through initiator tRNA(fMet) aminoacylation. The sequence is that of Methionine--tRNA ligase (metG) from Buchnera aphidicola subsp. Baizongia pistaciae (strain Bp).